The sequence spans 102 residues: MFAIIKTGGKQFRVFEGQEIYVEKLNVEPETTYQFQEVLAVGGSNPVLGTPFVKDAKVTAQVIKHDRAKKIIVFKYKKRKKYRCKQGHRQSYTKLLITKITV.

Belongs to the bacterial ribosomal protein bL21 family. Part of the 50S ribosomal subunit. Contacts protein L20.

In terms of biological role, this protein binds to 23S rRNA in the presence of protein L20. In Onion yellows phytoplasma (strain OY-M), this protein is Large ribosomal subunit protein bL21.